The sequence spans 293 residues: MASNVTNKMDPHSMNSRVFIGNLNTLVVKKSDVEAIFSKYGKIAGCSVHKGFAFVQYDKEKNARAAVAGEDGRMIASQVVDINLAAEPKVNRGNAGVKRSAAEMYGSSFDLDYGFQRDYYDGMYSFPARVPPPPPIALAVVPSKRQRLSGNTSRRGKSGFNSKSGKRGSSKSGKLKGDDLQAIKQELTQIKQKVDSLLENLEKIEKEQSKQEVEVKNAKSEEEQSSSSMKKDETHVKMESEGGAEDSAEEGDPLDDDVNEDQGDDQLELIKDDEKEAEEGEDDRDSTNGQDDS.

Positions 16 to 87 (SRVFIGNLNT…QVVDINLAAE (72 aa)) constitute an RRM domain. Disordered stretches follow at residues 137 to 177 (ALAV…KLKG) and 206 to 293 (KEQS…QDDS). Residues 177-225 (GDDLQAIKQELTQIKQKVDSLLENLEKIEKEQSKQEVEVKNAKSEEEQS) adopt a coiled-coil conformation. Basic and acidic residues-rich tracts occupy residues 206-222 (KEQS…KSEE) and 229-240 (MKKDETHVKMES). 2 stretches are compositionally biased toward acidic residues: residues 242–267 (GGAE…DDQL) and 275–284 (KEAEEGEDDR).

It belongs to the RRM HNRPC family. RALY subfamily.

It localises to the nucleus. In terms of biological role, may play a role in nucleosome assembly by neutralizing basic proteins such as A and B core hnRNPs. The polypeptide is Heterogeneous nuclear ribonucleoprotein C-like 1 (HNRNPCL1) (Homo sapiens (Human)).